We begin with the raw amino-acid sequence, 393 residues long: Argininosuccinate synthase (393 aa).

Residues 7–15 and alanine 34 contribute to the ATP site; that span reads AYSGGLDTS. Residues tyrosine 85 and serine 90 each coordinate L-citrulline. Position 115 (glycine 115) interacts with ATP. L-aspartate is bound by residues threonine 117, asparagine 121, and aspartate 122. Residue asparagine 121 coordinates L-citrulline. L-citrulline-binding residues include arginine 125, serine 176, serine 185, glutamate 261, and tyrosine 273.

Belongs to the argininosuccinate synthase family. Type 1 subfamily. Homotetramer.

It localises to the cytoplasm. It catalyses the reaction L-citrulline + L-aspartate + ATP = 2-(N(omega)-L-arginino)succinate + AMP + diphosphate + H(+). The protein operates within amino-acid biosynthesis; L-arginine biosynthesis; L-arginine from L-ornithine and carbamoyl phosphate: step 2/3. The sequence is that of Argininosuccinate synthase from Ehrlichia chaffeensis (strain ATCC CRL-10679 / Arkansas).